The following is a 547-amino-acid chain: Puff-specific protein Bx42 (547 aa).

Residues 177–343 (AQYIRYTPSQ…AREERAGLRN (167 aa)) are SNW. Phosphoserine occurs at positions 227 and 235. Disordered regions lie at residues 333–398 (RARE…ERDI) and 486–547 (QFSG…SKRD). Basic and acidic residues-rich tracts occupy residues 358-398 (EVRE…ERDI) and 526-539 (KRAE…SSHS).

The protein belongs to the SNW family.

The protein resides in the nucleus. Its function is as follows. May play a role in chromatin structure and function. The chain is Puff-specific protein Bx42 (Bx42) from Drosophila melanogaster (Fruit fly).